We begin with the raw amino-acid sequence, 347 residues long: 3-isopropylmalate dehydrogenase (347 aa).

Residues arginine 94, arginine 104, arginine 128, and aspartate 219 each contribute to the substrate site. Positions 219, 243, and 247 each coordinate Mg(2+). Residue 279–291 (GSAPDIAGQGKAD) participates in NAD(+) binding.

This sequence belongs to the isocitrate and isopropylmalate dehydrogenases family. LeuB type 2 subfamily. Homodimer. Mg(2+) serves as cofactor. The cofactor is Mn(2+).

The protein localises to the cytoplasm. It carries out the reaction (2R,3S)-3-isopropylmalate + NAD(+) = 4-methyl-2-oxopentanoate + CO2 + NADH. It functions in the pathway amino-acid biosynthesis; L-leucine biosynthesis; L-leucine from 3-methyl-2-oxobutanoate: step 3/4. In terms of biological role, catalyzes the oxidation of 3-carboxy-2-hydroxy-4-methylpentanoate (3-isopropylmalate) to 3-carboxy-4-methyl-2-oxopentanoate. The product decarboxylates to 4-methyl-2 oxopentanoate. This Streptomyces coelicolor (strain ATCC BAA-471 / A3(2) / M145) protein is 3-isopropylmalate dehydrogenase.